A 528-amino-acid chain; its full sequence is Cytochrome b5 reductase 4 (528 aa).

Methionine 1 is subject to N-acetylmethionine. Positions 1 to 29 (MLNVPSQAFPAPGSQQRVSSQGRSKVPLK) are disordered. Low complexity predominate over residues 13-24 (GSQQRVSSQGRS). A Cytochrome b5 heme-binding domain is found at 54–130 (LIEVTEEELK…LKECLVGRMA (77 aa)). Heme-binding residues include histidine 89 and histidine 112. The region spanning 172-263 (LSSPSYDWFQ…KESVSWQCLG (92 aa)) is the CS domain. Residues 280–392 (LYYRRCQLIS…SGPEGDFKVS (113 aa)) enclose the FAD-binding FR-type domain. FAD contacts are provided by residues 372–387 (DRLQIGDFISVSGPEG) and 399–431 (DLFLLAAGTGFTPMVTVLNYALSHMSSLRKVKL).

Belongs to the flavoprotein pyridine nucleotide cytochrome reductase family. Requires FAD as cofactor. Ubiquitously expressed. Isoform 2 is expressed in testis, brain, skeletal muscle and in the male germline.

It localises to the endoplasmic reticulum. The enzyme catalyses 2 Fe(III)-[cytochrome b5] + NADH = 2 Fe(II)-[cytochrome b5] + NAD(+) + H(+). In terms of biological role, NADH-cytochrome b5 reductase involved in endoplasmic reticulum stress response pathway. Plays a critical role in protecting pancreatic beta-cells against oxidant stress, possibly by protecting the cell from excess buildup of reactive oxygen species (ROS). This chain is Cytochrome b5 reductase 4 (Cyb5r4), found in Mus musculus (Mouse).